The sequence spans 295 residues: MTEVEKIYEFKEELGRGAFSIVYLGENKQTKQRYAIKVINKSELGKDYEKNLKMEVDILKKVNHPNIIALKELFDTPEKLYLVMELVTGGELFDKIVEKGSYSEADAANLVKKIVSAVGYLHGLNIVHRDLKPENLLLKSKENHLEVAIADFGLSKIIGQTLVMQTACGTPSYVAPEVLNATGYDKEVDMWSIGVITYILLCGFPPFYGDTVPEIFEQIMEANYEFPEEYWGGISKEAKDFIGKLLVVDVSKRLNATNALNHPWLKSNNSNNTIDTVKMKEYIVERQKTQTKLVN.

In terms of domain architecture, Protein kinase spans 8-265; it reads YEFKEELGRG…ATNALNHPWL (258 aa). ATP-binding positions include 14–22 and Lys-37; that span reads LGRGAFSIV. Asp-130 acts as the Proton acceptor in catalysis. A phosphothreonine mark is found at Thr-166 and Thr-289. Positions 264-295 are autoinhibitory domain; sequence WLKSNNSNNTIDTVKMKEYIVERQKTQTKLVN.

The protein belongs to the protein kinase superfamily. CAMK Ser/Thr protein kinase family. CaMK subfamily. In terms of processing, autophosphorylated. Transiently phosphorylated on Thr-166 and Thr-289. This phosphorylation is gbpC-dependent.

The enzyme catalyses L-seryl-[myosin light chain] + ATP = O-phospho-L-seryl-[myosin light chain] + ADP + H(+). It carries out the reaction L-threonyl-[myosin light chain] + ATP = O-phospho-L-threonyl-[myosin light chain] + ADP + H(+). Possesses an autoinhibitory domain. Autophosphorylation appears to increase the enzymatic activity. Activation is gbdC-dependent. Does not have a calmodulin-binding domain. Its function is as follows. Phosphorylates a specific serine in the N-terminus of a myosin light chain. Phosphorylates regulatory myosin light chain (mlcR) during chemotaxis. mlcR phosphorylation increases the motility and actin-activated ATPase activity of myosin, contributing to chemotaxis. The polypeptide is Myosin light chain kinase A (mlkA) (Dictyostelium discoideum (Social amoeba)).